Reading from the N-terminus, the 251-residue chain is tRNA pseudouridine synthase A (251 aa).

The active-site Nucleophile is the Asp-56. A substrate-binding site is contributed by Tyr-110.

The protein belongs to the tRNA pseudouridine synthase TruA family.

It carries out the reaction uridine(38/39/40) in tRNA = pseudouridine(38/39/40) in tRNA. Formation of pseudouridine at positions 38, 39 and 40 in the anticodon stem and loop of transfer RNAs. In Picrophilus torridus (strain ATCC 700027 / DSM 9790 / JCM 10055 / NBRC 100828 / KAW 2/3), this protein is tRNA pseudouridine synthase A.